Consider the following 456-residue polypeptide: uncharacterized protein (456 aa).

Positions 277–440 (IKNTKTIKQL…TKQLVRTTAK (164 aa)) constitute a YrdC-like domain.

This is an uncharacterized protein from Mycoplasma genitalium (strain ATCC 33530 / DSM 19775 / NCTC 10195 / G37) (Mycoplasmoides genitalium).